Here is a 305-residue protein sequence, read N- to C-terminus: Coiled-coil domain-containing protein 69 (305 aa).

Gly-2 is lipidated: N-myristoyl glycine. The interval 13 to 41 (LRKKKRQKAHQEGLTSKELNDLNAKSQEP) is disordered. Coiled-coil stretches lie at residues 42-167 (NELL…SVLS) and 216-278 (MERN…KEQN).

It belongs to the CCDC69 family.

It is found in the cytoplasm. The protein localises to the cytoskeleton. It localises to the spindle. Its subcellular location is the midbody. Functionally, may act as a scaffold to regulate the recruitment and assembly of spindle midzone components. This is Coiled-coil domain-containing protein 69 (ccdc69) from Xenopus tropicalis (Western clawed frog).